Consider the following 220-residue polypeptide: Ribose-5-phosphate isomerase A (220 aa).

Substrate contacts are provided by residues 25 to 28, 80 to 83, and 93 to 96; these read TGST, DGAD, and KGGG. Glu102 serves as the catalytic Proton acceptor. Residue Lys120 participates in substrate binding.

This sequence belongs to the ribose 5-phosphate isomerase family. As to quaternary structure, homodimer.

The enzyme catalyses aldehydo-D-ribose 5-phosphate = D-ribulose 5-phosphate. It functions in the pathway carbohydrate degradation; pentose phosphate pathway; D-ribose 5-phosphate from D-ribulose 5-phosphate (non-oxidative stage): step 1/1. In terms of biological role, catalyzes the reversible conversion of ribose-5-phosphate to ribulose 5-phosphate. In Bacillus thuringiensis subsp. konkukian (strain 97-27), this protein is Ribose-5-phosphate isomerase A.